A 485-amino-acid chain; its full sequence is Benzaldehyde dehydrogenase YfmT (485 aa).

Residue 231 to 236 (GSTKVG) coordinates NAD(+). Active-site residues include Glu-253 and Cys-287.

It belongs to the aldehyde dehydrogenase family.

It carries out the reaction benzaldehyde + NAD(+) + H2O = benzoate + NADH + 2 H(+). The enzyme catalyses vanillin + NAD(+) + H2O = vanillate + NADH + 2 H(+). In terms of biological role, a benzaldehyde dehydrogenase able to act on substrates with 3- and 4-hydroxy and methoxy substitutions; converts vanillin (4-hydroxy-3-methoxybenzaldehyde) to vanillic acid in vitro. The physiological substrate is unknown. The sequence is that of Benzaldehyde dehydrogenase YfmT (yfmT) from Bacillus subtilis (strain 168).